A 1514-amino-acid polypeptide reads, in one-letter code: ABC transporter C family member 5 (1514 aa).

The next 10 helical transmembrane spans lie at 16 to 36 (LLEL…LFAV), 76 to 96 (FGFN…VLVL), 111 to 131 (FVLC…FLVL), 142 to 162 (PFLV…TMYV), 177 to 197 (SHVV…FLAW), 312 to 332 (VFAG…SYFV), 334 to 354 (YLGG…IFFT), 421 to 441 (WYLH…AILY), 446 to 466 (IAAV…IPLA), and 533 to 553 (FIFW…SIFL). The region spanning 307–588 (AACNAVFAGL…FPDLVSMMAQ (282 aa)) is the ABC transmembrane type-1 1 domain. The ABC transporter 1 domain occupies 622-845 (IEIKDGVFCW…GTDFKALVSA (224 aa)). 657–664 (GTVGSGKS) provides a ligand contact to ATP. Positions 899–927 (ASDLKAIKEKKKKAKRSRKKQLVQEEERV) form a coiled coil. 6 helical membrane-spanning segments follow: residues 946-966 (GALI…QIAS), 986-1006 (PTLL…FIFV), 1078-1098 (IVAV…PVAV), 1117-1137 (IVSI…AGAA), 1155-1175 (LLDC…WLCL), and 1180-1200 (LSTL…HGTI). The ABC transmembrane type-1 2 domain occupies 949–1231 (IPLIILAQAA…WILSFCKLEN (283 aa)). The region spanning 1268–1502 (IELVDVKVRY…KSSMFLKLVT (235 aa)) is the ABC transporter 2 domain. 1302 to 1309 (GRTGSGKS) is a binding site for ATP.

The protein belongs to the ABC transporter superfamily. ABCC family. Conjugate transporter (TC 3.A.1.208) subfamily. As to expression, ubiquitous, mostly in vascular tissues and epidermis, including guard cells.

It localises to the membrane. The enzyme catalyses ATP + H2O + xenobioticSide 1 = ADP + phosphate + xenobioticSide 2.. Its activity is regulated as follows. (E(2)17G) transport activity in negatively regulated by organic anions such as oestradiol-3-sulfate, luteolin-7-O-diglucuronide-4'-O-glucuronide, glycocholate, vanadate and the sulfonylurea glibenclamide, and, to a lower extent, by bafilomycin A1, NH(4)Cl, GSH, GSSG and DNB-GS. Pump for glutathione S-conjugates. Involved in regulation of K(+) and Na(+) cell content. Mediates resistance to NaCl and Li(+), confers sensitivity to sulfonylurea drugs such as glibenclamide (inducer of stomatal opening), and required for stomatal opening regulation by auxin, abscisic acid (ABA) and external Ca(2+). Transports oestradiol-17-(beta-D-glucuronide) (E(2)17G). Involved in the root auxin content regulation that controls the transition from primary root elongation to lateral root formation. Plays a role in ABA-mediated germination inhibition. High-affinity inositol hexakisphosphate transporter that plays a role in guard cell signaling and phytic acid storage. Required for phytic acid accumulation in developing seeds. Phytic acid is the primary storage form of phosphorus in cereal grains and other plant seeds. The chain is ABC transporter C family member 5 (ABCC5) from Arabidopsis thaliana (Mouse-ear cress).